A 474-amino-acid polypeptide reads, in one-letter code: Glutamate--tRNA ligase (474 aa).

The 'HIGH' region signature appears at 11 to 21 (PSPTGFLHIGG). A 'KMSKS' region motif is present at residues 240 to 244 (KLSKR). Lys-243 provides a ligand contact to ATP.

This sequence belongs to the class-I aminoacyl-tRNA synthetase family. Glutamate--tRNA ligase type 1 subfamily. As to quaternary structure, monomer.

It localises to the cytoplasm. It carries out the reaction tRNA(Glu) + L-glutamate + ATP = L-glutamyl-tRNA(Glu) + AMP + diphosphate. In terms of biological role, catalyzes the attachment of glutamate to tRNA(Glu) in a two-step reaction: glutamate is first activated by ATP to form Glu-AMP and then transferred to the acceptor end of tRNA(Glu). The chain is Glutamate--tRNA ligase from Nitrobacter winogradskyi (strain ATCC 25391 / DSM 10237 / CIP 104748 / NCIMB 11846 / Nb-255).